Reading from the N-terminus, the 477-residue chain is Glycogen synthase (477 aa).

Lysine 15 contributes to the ADP-alpha-D-glucose binding site.

This sequence belongs to the glycosyltransferase 1 family. Bacterial/plant glycogen synthase subfamily.

The catalysed reaction is [(1-&gt;4)-alpha-D-glucosyl](n) + ADP-alpha-D-glucose = [(1-&gt;4)-alpha-D-glucosyl](n+1) + ADP + H(+). It functions in the pathway glycan biosynthesis; glycogen biosynthesis. Synthesizes alpha-1,4-glucan chains using ADP-glucose. The polypeptide is Glycogen synthase (Clostridium acetobutylicum (strain ATCC 824 / DSM 792 / JCM 1419 / IAM 19013 / LMG 5710 / NBRC 13948 / NRRL B-527 / VKM B-1787 / 2291 / W)).